The chain runs to 454 residues: GTPase Der (454 aa).

EngA-type G domains are found at residues 4 to 167 (AIVA…SEDK) and 188 to 363 (LQLA…ASWQ). GTP-binding positions include 10-17 (GKPNVGKS), 56-60 (DTPGL), 121-124 (NKTE), 194-201 (GRPNCGKS), 241-245 (DTAGV), and 306-309 (NKCD). Positions 364 to 450 (KRVTTGTLNQ…PVRLSFVKGK (87 aa)) constitute a KH-like domain.

Belongs to the TRAFAC class TrmE-Era-EngA-EngB-Septin-like GTPase superfamily. EngA (Der) GTPase family. Associates with the 50S ribosomal subunit.

In terms of biological role, GTPase that plays an essential role in the late steps of ribosome biogenesis. This is GTPase Der from Orientia tsutsugamushi (strain Boryong) (Rickettsia tsutsugamushi).